Consider the following 583-residue polypeptide: Protein LONG AFTER FAR-RED 3 (583 aa).

The helical transmembrane segment at 7–27 threads the bilayer; the sequence is FPVMIGFVSAAVFLLISVAYL. N-linked (GlcNAc...) asparagine glycans are attached at residues Asn-55 and Asn-374.

Belongs to the metallo-dependent hydrolases superfamily. In terms of tissue distribution, expressed at low level in seedlings, roots, leaves, stems, flowers, and siliques.

The protein localises to the membrane. Its subcellular location is the cytoplasm. It localises to the perinuclear region. Functionally, required for phyA-controlled responses to continuous far-red light (FRc) conditions, including the inhibition of hypocotyl elongation and the regulation of XTH15/XTR7 expression. This Arabidopsis thaliana (Mouse-ear cress) protein is Protein LONG AFTER FAR-RED 3.